A 494-amino-acid polypeptide reads, in one-letter code: MKMPAKTGKEYMERLKQAKSSVYIHGEKVEDVTVHPAFRNVVRSMAALYDRQYEKPEKMLYRSPTTGQPVGMTFIQPTTIDELIARREATQEWARMSAGMMGRSPDYLNAEVMAMGIANDLFAEDDPMFAENAKNYYEYAREHDISLTHTLIHPQMNRAKALHEQNDADVPLHLVERRKDGIIVSGIRLLATQGGITDEILVFPSTVKKATSGEDPYALAFAIPNNTPGVKFICREAFDYGRSAWDHPLASRFEEGDAIVSFENVFVPWERVFVCGNSSICNRTFRETNAVVHMSHQVVAKNIVKTEFLLGVTLCLIEAIGIGEFQHVKDKGAEIMLVLETMKSHLYRAEHNAKRDRWGTMTPDFAALDAARNWYPRIYPRLAEIIRILGASGLMAIPTEADFQHEEIGDIVRRAMQGATVDGYERVQLFRLAWDLTMSAFGARQTHYEYYFFGDPVRMGMAYFDGYEKEPYKQFVREFLRGAKSVFIPADNKH.

Residues 103-107 and histidine 149 contribute to the substrate site; that span reads RSPDY. FAD contacts are provided by residues 149-151, 155-158, and threonine 192; these read HTL and QMNR. Position 205-206 (205-206) interacts with substrate; it reads ST. 455–458 contacts FAD; the sequence is DPVR.

This sequence belongs to the FADH(2)-utilizing monooxygenase family. In terms of assembly, 4-HPA 3-monooxygenase consists of a reductase component HpaI and an oxygenase component HpaH.

The catalysed reaction is 4-hydroxyphenylacetate + FADH2 + O2 = 3,4-dihydroxyphenylacetate + FAD + H2O + H(+). The protein operates within aromatic compound metabolism; 4-hydroxyphenylacetate degradation; pyruvate and succinate semialdehyde from 4-hydroxyphenylacetate: step 1/7. In terms of biological role, utilizes FADH(2) supplied by HpaI, to catalyze the hydroxylation of 4-hydroxyphenylacetic acid, leading to the production of 3,4-dihydroxyphenylacetic acid (DHPA). The sequence is that of 4-hydroxyphenylacetate 3-monooxygenase oxygenase component (hpaH) from Geobacillus sp. (strain PA-9).